The sequence spans 373 residues: CCA-adding enzyme (373 aa).

Residues Gly-8 and Arg-11 each contribute to the ATP site. Residues Gly-8 and Arg-11 each coordinate CTP. 2 residues coordinate Mg(2+): Asp-21 and Asp-23. ATP-binding residues include Arg-91, Arg-137, and Arg-140. CTP is bound by residues Arg-91, Arg-137, and Arg-140.

It belongs to the tRNA nucleotidyltransferase/poly(A) polymerase family. Bacterial CCA-adding enzyme type 2 subfamily. Mg(2+) is required as a cofactor.

The enzyme catalyses a tRNA precursor + 2 CTP + ATP = a tRNA with a 3' CCA end + 3 diphosphate. It catalyses the reaction a tRNA with a 3' CCA end + 2 CTP + ATP = a tRNA with a 3' CCACCA end + 3 diphosphate. Its function is as follows. Catalyzes the addition and repair of the essential 3'-terminal CCA sequence in tRNAs without using a nucleic acid template. Adds these three nucleotides in the order of C, C, and A to the tRNA nucleotide-73, using CTP and ATP as substrates and producing inorganic pyrophosphate. tRNA 3'-terminal CCA addition is required both for tRNA processing and repair. Also involved in tRNA surveillance by mediating tandem CCA addition to generate a CCACCA at the 3' terminus of unstable tRNAs. While stable tRNAs receive only 3'-terminal CCA, unstable tRNAs are marked with CCACCA and rapidly degraded. This is CCA-adding enzyme from Marinobacter nauticus (strain ATCC 700491 / DSM 11845 / VT8) (Marinobacter aquaeolei).